Reading from the N-terminus, the 880-residue chain is Alanine--tRNA ligase (880 aa).

Positions 568, 572, 670, and 674 each coordinate Zn(2+).

The protein belongs to the class-II aminoacyl-tRNA synthetase family. It depends on Zn(2+) as a cofactor.

The protein localises to the cytoplasm. The catalysed reaction is tRNA(Ala) + L-alanine + ATP = L-alanyl-tRNA(Ala) + AMP + diphosphate. Its function is as follows. Catalyzes the attachment of alanine to tRNA(Ala) in a two-step reaction: alanine is first activated by ATP to form Ala-AMP and then transferred to the acceptor end of tRNA(Ala). Also edits incorrectly charged Ser-tRNA(Ala) and Gly-tRNA(Ala) via its editing domain. The polypeptide is Alanine--tRNA ligase (Ligilactobacillus salivarius (strain UCC118) (Lactobacillus salivarius)).